Consider the following 416-residue polypeptide: S-layer protein B (416 aa).

The signal sequence occupies residues 1–20 (MKYNLLPLILLSLLVAPLLA). The stretch at 310 to 330 (IASLNSTIQSLESQISSLSST) forms a coiled coil. Residues 392-412 (IALAVSIIAIIISIVVLILVF) form a helical membrane-spanning segment.

The protein belongs to the Sulfolobales SlaB family. In terms of assembly, the mushroom-shaped unit cells of the Sulfolobales' S-layers may consist of three SlaB subunits and six SlaA subunits.

The protein localises to the secreted. Its subcellular location is the cell wall. It is found in the S-layer. It localises to the cell membrane. Its function is as follows. S-layer small protein. May anchor the complex to the cell membrane. In Metallosphaera sedula (strain ATCC 51363 / DSM 5348 / JCM 9185 / NBRC 15509 / TH2), this protein is S-layer protein B.